The sequence spans 82 residues: Large ribosomal subunit protein bL27 (82 aa).

A disordered region spans residues 1–21; the sequence is MAHKKGASSSRNGRDSNAKRL.

It belongs to the bacterial ribosomal protein bL27 family.

In Tropheryma whipplei (strain Twist) (Whipple's bacillus), this protein is Large ribosomal subunit protein bL27.